The primary structure comprises 373 residues: Eukaryotic translation initiation factor 3 subunit M (373 aa).

Ser2 carries the N-acetylserine modification. Residues Ser2 and Ser152 each carry the phosphoserine modification. The 159-residue stretch at 180–338 (AASKVMVELL…RKVVVSHSTH (159 aa)) folds into the PCI domain. Lys253 is subject to N6-acetyllysine. Ser366 carries the phosphoserine modification.

The protein belongs to the eIF-3 subunit M family. In terms of assembly, component of the eukaryotic translation initiation factor 3 (eIF-3) complex, which is composed of 13 subunits: EIF3A, EIF3B, EIF3C, EIF3D, EIF3E, EIF3F, EIF3G, EIF3H, EIF3I, EIF3J, EIF3K, EIF3L and EIF3M. The eIF-3 complex appears to include 3 stable modules: module A is composed of EIF3A, EIF3B, EIF3G and EIF3I; module B is composed of EIF3F, EIF3H, and EIF3M; and module C is composed of EIF3C, EIF3D, EIF3E, EIF3K and EIF3L. EIF3C of module C binds EIF3B of module A and EIF3H of module B, thereby linking the three modules. EIF3J is a labile subunit that binds to the eIF-3 complex via EIF3B. The eIF-3 complex interacts with RPS6KB1 under conditions of nutrient depletion. Mitogenic stimulation leads to binding and activation of a complex composed of MTOR and RPTOR, leading to phosphorylation and release of RPS6KB1 and binding of EIF4B to eIF-3.

Its subcellular location is the cytoplasm. Component of the eukaryotic translation initiation factor 3 (eIF-3) complex, which is required for several steps in the initiation of protein synthesis. The eIF-3 complex associates with the 40S ribosome and facilitates the recruitment of eIF-1, eIF-1A, eIF-2:GTP:methionyl-tRNAi and eIF-5 to form the 43S pre-initiation complex (43S PIC). The eIF-3 complex stimulates mRNA recruitment to the 43S PIC and scanning of the mRNA for AUG recognition. The eIF-3 complex is also required for disassembly and recycling of post-termination ribosomal complexes and subsequently prevents premature joining of the 40S and 60S ribosomal subunits prior to initiation. The eIF-3 complex specifically targets and initiates translation of a subset of mRNAs involved in cell proliferation, including cell cycling, differentiation and apoptosis, and uses different modes of RNA stem-loop binding to exert either translational activation or repression. This Bos taurus (Bovine) protein is Eukaryotic translation initiation factor 3 subunit M.